A 142-amino-acid polypeptide reads, in one-letter code: 3-hydroxyacyl-[acyl-carrier-protein] dehydratase FabZ (142 aa).

Residue H48 is part of the active site.

The protein belongs to the thioester dehydratase family. FabZ subfamily.

The protein localises to the cytoplasm. It carries out the reaction a (3R)-hydroxyacyl-[ACP] = a (2E)-enoyl-[ACP] + H2O. Its function is as follows. Involved in unsaturated fatty acids biosynthesis. Catalyzes the dehydration of short chain beta-hydroxyacyl-ACPs and long chain saturated and unsaturated beta-hydroxyacyl-ACPs. In Ruminiclostridium cellulolyticum (strain ATCC 35319 / DSM 5812 / JCM 6584 / H10) (Clostridium cellulolyticum), this protein is 3-hydroxyacyl-[acyl-carrier-protein] dehydratase FabZ.